The sequence spans 180 residues: GTP cyclohydrolase 1 (180 aa).

The Zn(2+) site is built by C71, H74, and C142.

It belongs to the GTP cyclohydrolase I family. Homomer.

The catalysed reaction is GTP + H2O = 7,8-dihydroneopterin 3'-triphosphate + formate + H(+). The protein operates within cofactor biosynthesis; 7,8-dihydroneopterin triphosphate biosynthesis; 7,8-dihydroneopterin triphosphate from GTP: step 1/1. The protein is GTP cyclohydrolase 1 of Helicobacter pylori (strain P12).